The sequence spans 516 residues: MALSQFVPFSATELLLASAIFCLVFWVLRGSRPRVPKGLKSPPEPWGWPLLGHVLTLGKNPHLALSRMSQLYGDVLQIRIGSTPVLVLSGLDTIRQALVRQGDDFKGRPDLYSFTFITDGQSMSFSPDSGPVWAARRRLAQNALNTFSIASDPASSSSCYLEEHVSKEAEALISRLQELMAGPGHFDPYNQVVVSVANVIGAMCFGQHFPESSDEMLSLVKNSHEFVESASSGNPVDFFPILRYLPNPALQRFKAFNQRFRRFLQKTVQEHYQDFDKNSVQDITGALFKHSKKGPRASGNLIPQEKIVNLVNDIFGAEFDTIATAISWSLMYLVTKPEIQRKIQKELDAVIGRGRRPRLSDRPQLPYLEAFILETFRHSSFVPFTIPHSTTRDTTLNGFYIPRECCVFINQWQVNHDPQLWGDPSEFRPERFLTAEGTTINKPLSEKIMLFGLGKRRCIGEVLGKWEVFLFLAILLQQLEFSVPPGVKVDLTPIYGLTMKHARCEHFQARLRFSFQ.

An O-linked (GlcNAc) serine glycan is attached at S69. F226 provides a ligand contact to substrate. A heme-binding site is contributed by C458.

It belongs to the cytochrome P450 family. Interacts with PGRMC1; the interaction requires PGRMC1 homodimerization. Heme is required as a cofactor.

It localises to the endoplasmic reticulum membrane. The protein resides in the microsome membrane. The enzyme catalyses an organic molecule + reduced [NADPH--hemoprotein reductase] + O2 = an alcohol + oxidized [NADPH--hemoprotein reductase] + H2O + H(+). The catalysed reaction is 17beta-estradiol + reduced [NADPH--hemoprotein reductase] + O2 = 2-hydroxy-17beta-estradiol + oxidized [NADPH--hemoprotein reductase] + H2O + H(+). It catalyses the reaction 17beta-estradiol + reduced [NADPH--hemoprotein reductase] + O2 = 4-hydroxy-17beta-estradiol + oxidized [NADPH--hemoprotein reductase] + H2O + H(+). It carries out the reaction estrone + reduced [NADPH--hemoprotein reductase] + O2 = 2-hydroxyestrone + oxidized [NADPH--hemoprotein reductase] + H2O + H(+). The enzyme catalyses estrone + reduced [NADPH--hemoprotein reductase] + O2 = 4-hydroxyestrone + oxidized [NADPH--hemoprotein reductase] + H2O + H(+). The catalysed reaction is cholesterol + reduced [NADPH--hemoprotein reductase] + O2 = 25-hydroxycholesterol + oxidized [NADPH--hemoprotein reductase] + H2O + H(+). It catalyses the reaction all-trans-retinol + reduced [NADPH--hemoprotein reductase] + O2 = all-trans-retinal + oxidized [NADPH--hemoprotein reductase] + 2 H2O + H(+). It carries out the reaction all-trans-retinal + reduced [NADPH--hemoprotein reductase] + O2 = all-trans-retinoate + oxidized [NADPH--hemoprotein reductase] + H2O + 2 H(+). The enzyme catalyses (5Z,8Z,11Z,14Z)-eicosatetraenoate + reduced [NADPH--hemoprotein reductase] + O2 = (14R,15S)-epoxy-(5Z,8Z,11Z)-eicosatrienoate + oxidized [NADPH--hemoprotein reductase] + H2O + H(+). The catalysed reaction is (5Z,8Z,11Z,14Z)-eicosatetraenoate + reduced [NADPH--hemoprotein reductase] + O2 = (14S,15R)-epoxy-(5Z,8Z,11Z)-eicosatrienoate + oxidized [NADPH--hemoprotein reductase] + H2O + H(+). It catalyses the reaction (5Z,8Z,11Z,14Z,17Z)-eicosapentaenoate + reduced [NADPH--hemoprotein reductase] + O2 = (17R,18S)-epoxy-(5Z,8Z,11Z,14Z)-eicosatetraenoate + oxidized [NADPH--hemoprotein reductase] + H2O + H(+). It carries out the reaction (4Z,7Z,10Z,13Z,16Z,19Z)-docosahexaenoate + reduced [NADPH--hemoprotein reductase] + O2 = (19R,20S)-epoxy-(4Z,7Z,10Z,13Z,16Z)-docosapentaenoate + oxidized [NADPH--hemoprotein reductase] + H2O + H(+). The enzyme catalyses (5S)-hydroperoxy-(6E,8Z,11Z,14Z)-eicosatetraenoate = 5-oxo-(6E,8Z,11Z,14Z)-eicosatetraenoate + H2O. The catalysed reaction is (12S)-hydroperoxy-(5Z,8Z,10E,14Z)-eicosatetraenoate = 12-oxo-(5Z,8Z,10E,14Z)-eicosatetraenoate + H2O. It catalyses the reaction (15S)-hydroperoxy-(5Z,8Z,11Z,13E)-eicosatetraenoate = 15-oxo-(5Z,8Z,11Z,13E)-eicosatetraenoate + H2O. It carries out the reaction (13S)-hydroperoxy-(9Z,11E)-octadecadienoate = 13-oxo-(9Z,11E)-octadecadienoate + H2O. The enzyme catalyses (5Z,8Z,11Z,14Z)-eicosatetraenoate + reduced [NADPH--hemoprotein reductase] + O2 = 13-hydroxy-(5Z,8Z,11Z,14Z)-eicosatetraenoate + oxidized [NADPH--hemoprotein reductase] + H2O + H(+). The catalysed reaction is (5Z,8Z,11Z,14Z)-eicosatetraenoate + reduced [NADPH--hemoprotein reductase] + O2 = 19-hydroxy-(5Z,8Z,11Z,14Z)-eicosatetraenoate + oxidized [NADPH--hemoprotein reductase] + H2O + H(+). It catalyses the reaction (9Z,12Z)-octadecadienoate + reduced [NADPH--hemoprotein reductase] + O2 = 11-hydroxy-(9Z,12Z)-octadecadienoate + oxidized [NADPH--hemoprotein reductase] + H2O + H(+). It functions in the pathway cofactor metabolism; retinol metabolism. The protein operates within steroid metabolism; cholesterol metabolism. It participates in lipid metabolism; arachidonate metabolism. Its function is as follows. A cytochrome P450 monooxygenase involved in the metabolism of various endogenous substrates, including fatty acids, steroid hormones and vitamins. Mechanistically, uses molecular oxygen inserting one oxygen atom into a substrate, and reducing the second into a water molecule, with two electrons provided by NADPH via cytochrome P450 reductase (NADPH--hemoprotein reductase). Catalyzes the hydroxylation of carbon-hydrogen bonds. Exhibits high catalytic activity for the formation of hydroxyestrogens from estrone (E1) and 17beta-estradiol (E2), namely 2-hydroxy E1 and E2. Metabolizes cholesterol toward 25-hydroxycholesterol, a physiological regulator of cellular cholesterol homeostasis. May act as a major enzyme for all-trans retinoic acid biosynthesis in the liver. Catalyzes two successive oxidative transformation of all-trans retinol to all-trans retinal and then to the active form all-trans retinoic acid. Primarily catalyzes stereoselective epoxidation of the last double bond of polyunsaturated fatty acids (PUFA), displaying a strong preference for the (R,S) stereoisomer. Catalyzes bisallylic hydroxylation and omega-1 hydroxylation of PUFA. May also participate in eicosanoids metabolism by converting hydroperoxide species into oxo metabolites (lipoxygenase-like reaction, NADPH-independent). Plays a role in the oxidative metabolism of xenobiotics. Catalyzes the N-hydroxylation of heterocyclic amines and the O-deethylation of phenacetin. Metabolizes caffeine via N3-demethylation. The polypeptide is Cytochrome P450 1A2 (CYP1A2) (Macaca fuscata fuscata (Japanese macaque)).